The following is a 268-amino-acid chain: Putative pyruvate, phosphate dikinase regulatory protein (268 aa).

An ADP-binding site is contributed by 147 to 154; the sequence is GLSRTSKT.

Belongs to the pyruvate, phosphate/water dikinase regulatory protein family. PDRP subfamily.

It carries out the reaction N(tele)-phospho-L-histidyl/L-threonyl-[pyruvate, phosphate dikinase] + ADP = N(tele)-phospho-L-histidyl/O-phospho-L-threonyl-[pyruvate, phosphate dikinase] + AMP + H(+). It catalyses the reaction N(tele)-phospho-L-histidyl/O-phospho-L-threonyl-[pyruvate, phosphate dikinase] + phosphate + H(+) = N(tele)-phospho-L-histidyl/L-threonyl-[pyruvate, phosphate dikinase] + diphosphate. Its function is as follows. Bifunctional serine/threonine kinase and phosphorylase involved in the regulation of the pyruvate, phosphate dikinase (PPDK) by catalyzing its phosphorylation/dephosphorylation. The sequence is that of Putative pyruvate, phosphate dikinase regulatory protein from Clostridium beijerinckii (strain ATCC 51743 / NCIMB 8052) (Clostridium acetobutylicum).